We begin with the raw amino-acid sequence, 384 residues long: Glucans biosynthesis protein C (384 aa).

A run of 10 helical transmembrane segments spans residues 17–37 (AWLMLLGIPFHISLIYSTHSW), 54–74 (FIHAFRMQVFFVISGYFSYML), 91–111 (VGIPMLTAIPLLTLPQFILLQ), 140–160 (LWFLLVLVILTTVSIGIFTWF), 173–193 (AISLVRLSLIFFLLGMAYAAI), 212–232 (FIVMQTLFYVPFFILGALAFI), 240–260 (FTTPSRGCTLGAAVAFIAYLL), 274–294 (TESVITMVMGLWMVNVVFSLG), 311–331 (ASLFIYLVHHPLTLFFGAYIT), and 338–358 (LIGFLCGLIFVMGIALILYEI).

The protein belongs to the acyltransferase 3 family. OpgC subfamily.

The protein localises to the cell membrane. It functions in the pathway glycan metabolism; osmoregulated periplasmic glucan (OPG) biosynthesis. Functionally, necessary for the succinyl substitution of periplasmic glucans. Could catalyze the transfer of succinyl residues from the cytoplasmic side of the membrane to the nascent glucan backbones on the periplasmic side of the membrane. The chain is Glucans biosynthesis protein C from Salmonella gallinarum (strain 287/91 / NCTC 13346).